A 119-amino-acid chain; its full sequence is Large ribosomal subunit protein uL14 (119 aa).

Belongs to the universal ribosomal protein uL14 family. In terms of assembly, part of the 50S ribosomal subunit. Forms a cluster with proteins L3 and L19. In the 70S ribosome, L14 and L19 interact and together make contacts with the 16S rRNA in bridges B5 and B8.

In terms of biological role, binds to 23S rRNA. Forms part of two intersubunit bridges in the 70S ribosome. This is Large ribosomal subunit protein uL14 from Ehrlichia canis (strain Jake).